The following is a 187-amino-acid chain: Shikimate kinase (187 aa).

Position 14-19 (14-19 (GSGKST)) interacts with ATP. Residue S18 coordinates Mg(2+). Residues D36, R60, and G82 each coordinate substrate. R120 is a binding site for ATP. Substrate is bound at residue R147.

It belongs to the shikimate kinase family. In terms of assembly, monomer. Mg(2+) is required as a cofactor.

It is found in the cytoplasm. It catalyses the reaction shikimate + ATP = 3-phosphoshikimate + ADP + H(+). The protein operates within metabolic intermediate biosynthesis; chorismate biosynthesis; chorismate from D-erythrose 4-phosphate and phosphoenolpyruvate: step 5/7. Its function is as follows. Catalyzes the specific phosphorylation of the 3-hydroxyl group of shikimic acid using ATP as a cosubstrate. This Chlorobaculum parvum (strain DSM 263 / NCIMB 8327) (Chlorobium vibrioforme subsp. thiosulfatophilum) protein is Shikimate kinase.